Here is a 681-residue protein sequence, read N- to C-terminus: Chaperone protein htpG (681 aa).

An a; substrate-binding region spans residues 1–326 (MQKGNIGVTT…SPDIPLNVSR (326 aa)). The interval 327 to 545 (SYLQSDSNVK…YMRRMKEMAN (219 aa)) is b. Residues 546-681 (IQAGMSFYGE…NFVKRSIELI (136 aa)) are c. The tract at residues 601–620 (DALKKKQEGKKDEDIPTAEK) is disordered.

Belongs to the heat shock protein 90 family. Homodimer.

It is found in the cytoplasm. Its function is as follows. Molecular chaperone. Has ATPase activity. The sequence is that of Chaperone protein htpG from Bacteroides fragilis (strain 638R).